The following is a 140-amino-acid chain: Large ribosomal subunit protein uL16 (140 aa).

Belongs to the universal ribosomal protein uL16 family. In terms of assembly, part of the 50S ribosomal subunit.

Functionally, binds 23S rRNA and is also seen to make contacts with the A and possibly P site tRNAs. The polypeptide is Large ribosomal subunit protein uL16 (Citrifermentans bemidjiense (strain ATCC BAA-1014 / DSM 16622 / JCM 12645 / Bem) (Geobacter bemidjiensis)).